Reading from the N-terminus, the 353-residue chain is Quinolinate synthase (353 aa).

Positions 49 and 70 each coordinate iminosuccinate. Cys115 provides a ligand contact to [4Fe-4S] cluster. Iminosuccinate-binding positions include 141-143 and Ser158; that span reads YAN. Cys202 contributes to the [4Fe-4S] cluster binding site. Residues 228 to 230 and Thr245 each bind iminosuccinate; that span reads HPE. Position 299 (Cys299) interacts with [4Fe-4S] cluster.

The protein belongs to the quinolinate synthase family. Type 1 subfamily. [4Fe-4S] cluster is required as a cofactor.

The protein localises to the cytoplasm. It carries out the reaction iminosuccinate + dihydroxyacetone phosphate = quinolinate + phosphate + 2 H2O + H(+). Its pathway is cofactor biosynthesis; NAD(+) biosynthesis; quinolinate from iminoaspartate: step 1/1. Its function is as follows. Catalyzes the condensation of iminoaspartate with dihydroxyacetone phosphate to form quinolinate. The polypeptide is Quinolinate synthase (Marinobacter nauticus (strain ATCC 700491 / DSM 11845 / VT8) (Marinobacter aquaeolei)).